A 437-amino-acid polypeptide reads, in one-letter code: Epsilon-sarcoglycan (437 aa).

At 1 to 317 (MQLPRWWELG…LKSRDYYTDF (317 aa)) the chain is on the extracellular side. N-linked (GlcNAc...) asparagine glycosylation is present at asparagine 200. A helical transmembrane segment spans residues 318–338 (LITLAVPSAVALVLFLILAYI). Over 339 to 437 (MCCRREGVEK…QQQTTGKWYP (99 aa)) the chain is Cytoplasmic.

Belongs to the sarcoglycan alpha/epsilon family. In terms of processing, N-glycosylated. Post-translationally, ubiquitinated, leading to its degradation by the proteasome.

It is found in the cell membrane. Its subcellular location is the sarcolemma. The protein localises to the cytoplasm. It localises to the cytoskeleton. The protein resides in the cell projection. It is found in the dendrite. Its subcellular location is the golgi apparatus. Its function is as follows. Component of the sarcoglycan complex, a subcomplex of the dystrophin-glycoprotein complex which forms a link between the F-actin cytoskeleton and the extracellular matrix. This is Epsilon-sarcoglycan from Pongo abelii (Sumatran orangutan).